A 369-amino-acid chain; its full sequence is DNA replication and repair protein RecF (369 aa).

30–37 (GDNGSGKT) lines the ATP pocket.

It belongs to the RecF family.

It is found in the cytoplasm. In terms of biological role, the RecF protein is involved in DNA metabolism; it is required for DNA replication and normal SOS inducibility. RecF binds preferentially to single-stranded, linear DNA. It also seems to bind ATP. This Pseudomonas aeruginosa (strain LESB58) protein is DNA replication and repair protein RecF.